Consider the following 252-residue polypeptide: Small ribosomal subunit protein uS3 (252 aa).

The region spanning 39-109 is the KH type-2 domain; it reads IRNYVNTRLK…EVKIDVVEVV (71 aa). The span at 222-240 shows a compositional bias: basic and acidic residues; the sequence is MKKIRDRRNDQRSRGGRDS. The segment at 222 to 252 is disordered; the sequence is MKKIRDRRNDQRSRGGRDSRNKRRRRPKNTA. Residues 241-252 are compositionally biased toward basic residues; sequence RNKRRRRPKNTA.

The protein belongs to the universal ribosomal protein uS3 family. As to quaternary structure, part of the 30S ribosomal subunit. Forms a tight complex with proteins S10 and S14.

Binds the lower part of the 30S subunit head. Binds mRNA in the 70S ribosome, positioning it for translation. The protein is Small ribosomal subunit protein uS3 of Chlorobium phaeobacteroides (strain BS1).